The sequence spans 639 residues: tRNA uridine 5-carboxymethylaminomethyl modification enzyme MnmG (639 aa).

An FAD-binding site is contributed by 15 to 20; that stretch reads GAGHAG. 276–290 serves as a coordination point for NAD(+); that stretch reads GPRYCPSIEDKIVRF.

The protein belongs to the MnmG family. In terms of assembly, homodimer. Heterotetramer of two MnmE and two MnmG subunits. The cofactor is FAD.

It localises to the cytoplasm. In terms of biological role, NAD-binding protein involved in the addition of a carboxymethylaminomethyl (cmnm) group at the wobble position (U34) of certain tRNAs, forming tRNA-cmnm(5)s(2)U34. The sequence is that of tRNA uridine 5-carboxymethylaminomethyl modification enzyme MnmG from Streptococcus gordonii (strain Challis / ATCC 35105 / BCRC 15272 / CH1 / DL1 / V288).